The following is a 688-amino-acid chain: PTS system glucoside-specific EIICBA component (688 aa).

The 425-residue stretch at 3–427 folds into the PTS EIIC type-1 domain; it reads KKLFGQLQRI…FKLKTPGRED (425 aa). The next 10 membrane-spanning stretches (helical) occupy residues 12–32, 81–101, 137–157, 182–202, 223–243, 284–304, 315–335, 340–360, 364–384, and 395–415; these read IGKA…LLAF, LGLA…YLIM, LVLG…MGAL, FVPI…SFAW, LTTF…LHHI, AFTT…AFAI, VVGG…ITEP, FLFV…TSFL, LLGV…ILYG, and LVIP…DFAI. Positions 438–519 constitute a PTS EIIB type-1 domain; the sequence is AKLPFDVLDA…AKIMSGEITK (82 aa). Cysteine 460 functions as the Phosphocysteine intermediate; for EIIB activity in the catalytic mechanism. Residues 560-664 form the PTS EIIA type-1 domain; the sequence is DQVFAGKMMG…SIVTPMIITN (105 aa). Residue histidine 612 is the Tele-phosphohistidine intermediate; for EIIA activity of the active site.

It is found in the cell membrane. In terms of biological role, the phosphoenolpyruvate-dependent sugar phosphotransferase system (sugar PTS), a major carbohydrate active -transport system, catalyzes the phosphorylation of incoming sugar substrates concomitantly with their translocation across the cell membrane. This system is involved in alpha- and beta-glucoside transport. In Staphylococcus aureus (strain JH1), this protein is PTS system glucoside-specific EIICBA component (glcB).